A 298-amino-acid polypeptide reads, in one-letter code: Formylmethanofuran--tetrahydromethanopterin formyltransferase (298 aa).

The protein belongs to the FTR family. Homotetramer.

It is found in the cytoplasm. It catalyses the reaction N-formylmethanofuran + 5,6,7,8-tetrahydromethanopterin + H(+) = N(5)-formyl-5,6,7,8-tetrahydromethanopterin + methanofuran. It functions in the pathway one-carbon metabolism; formaldehyde degradation; formate from formaldehyde (H(4)MPT route): step 4/5. Catalyzes the transfer of a formyl group from 5-formyl tetrahydromethanopterin (5-formyl-H(4)MPT) to methanofuran (MFR) to produce formylmethanofuran (formyl-MFR) and tetrahydromethanopterin (H(4)MPT). The chain is Formylmethanofuran--tetrahydromethanopterin formyltransferase from Methylococcus capsulatus (strain ATCC 33009 / NCIMB 11132 / Bath).